Consider the following 607-residue polypeptide: Bifunctional endo-1,4-beta-xylanase A (607 aa).

An N-terminal signal peptide occupies residues 1 to 18; that stretch reads MRTIKFFFAVAIATVAKA. Positions 35-242 constitute a GH11 1 domain; sequence NGQTQHKGVA…SSGIADVTKL (208 aa). Glutamate 141 (nucleophile) is an active-site residue. Catalysis depends on glutamate 223, which acts as the Proton donor. Positions 248 to 272 are enriched in polar residues; the sequence is QKGSNPAPTSTGTVPSSSAGGSTAN. The tract at residues 248–284 is disordered; it reads QKGSNPAPTSTGTVPSSSAGGSTANGKKFTVGNGQNQ. A GH11 2 domain is found at 280–487; it reads NGQNQHKGVN…SSGVADVTLL (208 aa). Glutamate 386 acts as the Nucleophile in catalysis. Glutamate 474 acts as the Proton donor in catalysis. Residues 493 to 514 form a disordered region; it reads PKGSSPATSAAPRTTTRTTTRT. Over residues 496–514 the composition is skewed to low complexity; sequence SSPATSAAPRTTTRTTTRT. CBM10 domains are found at residues 523–563 and 566–606; these read KCSA…CGCG and QCSS…CGCG.

Belongs to the glycosyl hydrolase 11 (cellulase G) family.

The catalysed reaction is Endohydrolysis of (1-&gt;4)-beta-D-xylosidic linkages in xylans.. It functions in the pathway glycan degradation; xylan degradation. Its function is as follows. Hydrolyzes xylans into xylobiose and xylose. This chain is Bifunctional endo-1,4-beta-xylanase A (XYNA), found in Neocallimastix patriciarum (Rumen fungus).